The sequence spans 3010 residues: Genome polyprotein (3010 aa).

Serine 2 carries the N-acetylserine; by host modification. Positions 2–23 (STNPKPQRKTKRNTNRRPQDVK) are interaction with STAT1. The segment at 2–58 (STNPKPQRKTKRNTNRRPQDVKFPGGGQIVGGVYLLPRRGPRLGVRATRKTSERSQP) is interaction with EIF2AK2/PKR. An interaction with DDX3X region spans residues 2–59 (STNPKPQRKTKRNTNRRPQDVKFPGGGQIVGGVYLLPRRGPRLGVRATRKTSERSQPR). The segment at 2–75 (STNPKPQRKT…PKARQPEGRA (74 aa)) is disordered. Residues 2-168 (STNPKPQRKT…EDGVNYATGN (167 aa)) lie on the Cytoplasmic side of the membrane. 2 consecutive short sequence motifs (nuclear localization signal) follow at residues 5-13 (PKPQRKTKR) and 38-43 (PRRGPR). Residues 7–16 (PQRKTKRNTN) are compositionally biased toward basic residues. Low complexity predominate over residues 32–47 (GGVYLLPRRGPRLGVR). Serine 53 is modified (phosphoserine; by host). Short sequence motifs (nuclear localization signal) lie at residues 58-64 (PRGRRQP) and 66-71 (PKARQP). Phosphoserine; by host is present on serine 99. The interval 112–152 (PRRRSRNLGKVIDTLTCGFADLMGYIPLVGAPLGGVARALA) is important for endoplasmic reticulum and mitochondrial localization. The residue at position 116 (serine 116) is a Phosphoserine; by host PKA. The segment at 122–173 (VIDTLTCGFADLMGYIPLVGAPLGGVARALAHGVRVVEDGVNYATGNLPGCS) is interaction with APOA2. The important for lipid droplets localization stretch occupies residues 164–167 (YATG). Residues 169–189 (LPGCSFSIFLLALLSCLTIPA) traverse the membrane as a helical segment. Residues 178 to 191 (LLALLSCLTIPASA) constitute a propeptide, ER anchor for the core protein, removed in mature form by host signal peptidase. Residues 190–358 (SAYEVRNVSG…AGAHWGVLAG (169 aa)) lie on the Lumenal side of the membrane. Residues asparagine 196, asparagine 209, asparagine 234, and asparagine 250 are each glycosylated (N-linked (GlcNAc...) asparagine; by host). Positions 265–296 (LVGAAAFCSAMYVGDLCGSVFLVSQLFTFSPR) are important for fusion. A glycan (N-linked (GlcNAc...) asparagine; by host) is linked at asparagine 305. Residues 359-379 (LAYYSMVGNWAKVLIVMLLFA) form a helical membrane-spanning segment. Residues 380–725 (GVDGETRVTG…WDYIVILFLL (346 aa)) are Lumenal-facing. The segment at 385-411 (TRVTGGQIARNAYSLTTLFSSGSAQNI) is HVR1. N-linked (GlcNAc...) (high mannose) asparagine; by host glycans are attached at residues asparagine 417, asparagine 423, asparagine 430, and asparagine 448. Intrachain disulfides connect cysteine 429–cysteine 552, cysteine 452–cysteine 459, cysteine 486–cysteine 494, and cysteine 503–cysteine 508. The interval 474–479 (YAEQGG) is HVR2. Residues 480 to 493 (QDQRPYCWHYAPKP) form a CD81-binding 1 region. A glycan (N-linked (GlcNAc...) (high mannose) asparagine; by host) is linked at asparagine 532. Asparagine 540 carries N-linked (GlcNAc...) asparagine; by host glycosylation. Residues 544 to 551 (PPQGNWFG) form a CD81-binding 2 region. Asparagine 556 carries N-linked (GlcNAc...) (high mannose) asparagine; by host glycosylation. A disulfide bridge connects residues cysteine 564 and cysteine 569. Asparagine 576 carries an N-linked (GlcNAc...) (high mannose) asparagine; by host glycan. 3 cysteine pairs are disulfide-bonded: cysteine 581-cysteine 585, cysteine 597-cysteine 620, and cysteine 607-cysteine 644. Residues asparagine 623 and asparagine 645 are each glycosylated (N-linked (GlcNAc...) (high mannose) asparagine; by host). Cysteine 652 and cysteine 677 form a disulfide bridge. The PKR/eIF2-alpha phosphorylation homology domain (PePHD) stretch occupies residues 660–671 (LELSPLLLSTTE). Residues 726–746 (LADARVCACLWMMLLIAQAEA) form a helical membrane-spanning segment. Residues 747 to 757 (ALENLVVLNAA) are Lumenal-facing. Residues 758-778 (SVAGAHGILSFLVFFCAAWYI) form a helical membrane-spanning segment. At 779-781 (KGK) the chain is on the cytoplasmic side. Residues 782–803 (LVPGAAYAFYGVWPLLLLLLAL) form a helical membrane-spanning segment. Residues 804–813 (PPRAYAMERE) lie on the Lumenal side of the membrane. A helical transmembrane segment spans residues 814–834 (MAASCGGAVFVGLVLLTLSPY). Over 835–838 (YKEF) the chain is Cytoplasmic. The chain crosses the membrane as a helical span at residues 839-859 (LARLIWWLQYFITRAEAHLQV). Residues 860–881 (WIPPLNIRGGRDAIILLACVVH) lie on the Lumenal side of the membrane. Residues 882-902 (PELIFDITKLLLAILGPLMVL) form a helical membrane-spanning segment. The Peptidase C18 domain occupies 903 to 1026 (QASITQVPYF…SLEGQGWRLL (124 aa)). Residues 903–1657 (QASITQVPYF…CMSADLEVVT (755 aa)) are Cytoplasmic-facing. The interval 904–1206 (ASITQVPYFV…PVESMETTMR (303 aa)) is protease NS2-3. Residue cysteine 922 is the site of S-palmitoyl cysteine; by host attachment. The interaction with host SCPS1 stretch occupies residues 929-949 (AGGHYVQMAFVKLTALTGTYV). Residues histidine 952, glutamate 972, and cysteine 993 each act as for protease NS2 activity; shared with dimeric partner in the active site. The Peptidase S29 domain occupies 1027 to 1208 (APITAYSQQT…ESMETTMRSP (182 aa)). Active-site charge relay system; for serine protease NS3 activity residues include histidine 1083 and aspartate 1107. Zn(2+) contacts are provided by cysteine 1123 and cysteine 1125. Serine 1165 acts as the Charge relay system; for serine protease NS3 activity in catalysis. Zn(2+) contacts are provided by cysteine 1171 and histidine 1175. A Helicase ATP-binding domain is found at 1217–1369 (PAVPQTFQVA…PNIEEVALSN (153 aa)). 1230 to 1237 (APTGSGKS) serves as a coordination point for ATP. The Mg(2+) site is built by serine 1237 and glutamate 1317. The short motif at 1316 to 1319 (DECH) is the DECH box element. Residues 1486–1497 (QRRGRTGRGRRG) form an RNA-binding region. A helical membrane pass occupies residues 1658 to 1678 (STWVLVGGVLAALAAYCLTTG). An NS3-binding region spans residues 1679-1690 (SVVIVGRIILSG). Topologically, residues 1679–1805 (SVVIVGRIIL…SITSPLSTQN (127 aa)) are cytoplasmic. A helical membrane pass occupies residues 1806–1824 (TLLFNIWGGWVAAQLAPPS). Over 1825-1828 (AASA) the chain is Lumenal. The chain crosses the membrane as a helical span at residues 1829-1849 (FVGAGIAGAAVGSIGLGKVLV). Aspartate 1850 is a topological domain (cytoplasmic). A helical transmembrane segment spans residues 1851–1871 (ILAGYGAGVAGALVAFKIMSG). Over 1872–1881 (EVPSTEDLVN) the chain is Lumenal. The chain crosses the membrane as a helical span at residues 1882–1902 (LLPAILSPGALVVGVVCAAIL). The Cytoplasmic portion of the chain corresponds to 1903 to 1972 (RRHVGPGEGA…WINEDCSTPC (70 aa)). Residues cysteine 1968 and cysteine 1972 are each lipidated (S-palmitoyl cysteine; by host). The stretch at 1973–2002 (SGSWLRDVWDWICTVLTDFKTWLQSKLLPR) is an intramembrane region. Over 2003-2989 (LPGVPFFSCQ…YHSLSRARPR (987 aa)) the chain is Cytoplasmic. Positions 2011, 2029, 2031, and 2052 each coordinate Zn(2+). The segment at 2120–2208 (EFFTEVDGVR…ASSSASQLSA (89 aa)) is FKBP8-binding. A transcriptional activation region spans residues 2120–2332 (EFFTEVDGVR…PIPPPRRKRT (213 aa)). The interaction with non-structural protein 4A stretch occupies residues 2135–2139 (PACKP). The tract at residues 2189 to 2441 (RLARGSPPSL…PCAAEESKLP (253 aa)) is interaction with host SKP2. Serine 2194 is subject to Phosphoserine; by host; in p56. Residues serine 2197, serine 2201, serine 2204, serine 2207, and serine 2210 each carry the phosphoserine; by host; in p58 modification. Residues 2210 to 2249 (SLKATCTTHHDSPDVDLIEANLLWRQEMGGNITRVESENK) form an ISDR region. The tract at residues 2210–2275 (SLKATCTTHH…REPSVAAEIL (66 aa)) is interaction with EIF2AK2/PKR. The NS4B-binding stretch occupies residues 2249-2306 (KVVILDSFDPLRAEEDEREPSVAAEILRKTKRFPPAMPIWARPDYNPPLLESWKDPDY). An SH3-binding motif is present at residues 2322–2325 (PPIP). The short motif at 2326-2334 (PPRRKRTVV) is the Nuclear localization signal element. Lysine 2350 participates in a covalent cross-link: Glycyl lysine isopeptide (Lys-Gly) (interchain with G-Cter in ubiquitin). Over residues 2351–2365 (TFGSSGSSAVDSGTA) the composition is skewed to polar residues. The segment at 2351 to 2407 (TFGSSGSSAVDSGTATAPPDQASDDGDQGSDVESYSSMPPLEGEPGDPDLSDGSWST) is disordered. The segment at 2354-2377 (SSGSSAVDSGTATAPPDQASDDGD) is V3. Serine 2448 and serine 2461 each carry phosphoserine; by host. In terms of domain architecture, RdRp catalytic spans 2633-2751 (PMGFSYDTRC…ICESAGTQED (119 aa)). 3 residues coordinate Mg(2+): aspartate 2639, aspartate 2737, and aspartate 2738. Residues 2990-3010 (WFMLCLLLLSVGVGIYLLPNR) traverse the membrane as a helical segment.

It belongs to the hepacivirus polyprotein family. In terms of assembly, homooligomer. Interacts with E1 (via C-terminus). Interacts with the non-structural protein 5A. Interacts (via N-terminus) with host STAT1 (via SH2 domain); this interaction results in decreased STAT1 phosphorylation and ubiquitin-mediated proteasome-dependent STAT1 degradation, leading to decreased IFN-stimulated gene transcription. Interacts with host STAT3; this interaction constitutively activates STAT3. Interacts with host LTBR receptor. Interacts with host TNFRSF1A receptor and possibly induces apoptosis. Interacts with host HNRPK. Interacts with host YWHAE. Interacts with host UBE3A/E6AP. Interacts with host DDX3X. Interacts with host APOA2. Interacts with host RXRA protein. Interacts with host SP110 isoform 3/Sp110b; this interaction sequesters the transcriptional corepressor SP110 away from the nucleus. Interacts with host CREB3 nuclear transcription protein; this interaction triggers cell transformation. Interacts with host ACY3. Interacts with host C1QR1. Interacts with host RBM24; this interaction, which enhances the interaction of the mature core protein with 5'-UTR, may inhibit viral translation and favor replication. Interacts with host EIF2AK2/PKR; this interaction induces the autophosphorylation of EIF2AK2. Part of the viral assembly initiation complex composed of NS2, E1, E2, NS3, NS4A, NS5A and the mature core protein. Forms a heterodimer with envelope glycoprotein E2. Interacts with mature core protein. Interacts with protease NS2. The heterodimer E1/E2 interacts with host CLDN1; this interaction plays a role in viral entry into host cell. Interacts with host SPSB2 (via C-terminus). Part of the viral assembly initiation complex composed of NS2, E1, E2, NS3, NS4A, NS5A and the mature core protein. Interacts with host NEURL3; this interaction prevents E1 binding to glycoprotein E2. As to quaternary structure, forms a heterodimer with envelope glycoprotein E1. Interacts with host CD81 and SCARB1 receptors; these interactions play a role in viral entry into host cell. Interacts with host EIF2AK2/PKR; this interaction inhibits EIF2AK2 and probably allows the virus to evade the innate immune response. Interacts with host CD209/DC-SIGN and CLEC4M/DC-SIGNR. Interact with host SPCS1; this interaction is essential for viral particle assembly. Interacts with protease NS2. The heterodimer E1/E2 interacts with host CLDN1; this interaction plays a role in viral entry into host cell. Part of the viral assembly initiation complex composed of NS2, E1, E2, NS3, NS4A, NS5A and the mature core protein. Interacts with host SLC3A2/4F2hc; the interaction may facilitate viral entry into host cell. Interacts with human PLSCR1. In terms of assembly, homohexamer. Homoheptamer. Interacts with protease NS2. Homodimer. Interacts with host SPCS1; this interaction is essential for viral particle assembly. Interacts with envelope glycoprotein E1. Interacts with envelope glycoprotein E2. Interacts with viroporin p7. Interacts with serine protease/helicase NS3. Part of the replication complex composed of NS2, NS3, NS4A, NS4B, NS5A and the RNA-directed RNA polymerase embedded in an ER-derived membranous web. Part of the viral assembly initiation complex composed of NS2, E1, E2, NS3, NS4A, NS5A and the mature core protein. As to quaternary structure, interacts with protease NS2. Interacts with non-structural protein 4A; this interaction stabilizes the folding of NS3 serine protease. NS3-NS4A interaction is essential for NS3 activation and allows membrane anchorage of the latter. NS3/NS4A complex also prevents phosphorylation of host IRF3, thus preventing the establishment of dsRNA induced antiviral state. Interacts with host MAVS; this interaction leads to the cleavage and inhibition of host MAVS. Interacts with host TICAM1; this interaction leads to the cleavage and inhibition of host TICAM1. Interacts with host TANK-binding kinase/TBK1; this interaction results in the inhibition of the association between TBK1 and IRF3, which leads to the inhibition of IRF3 activation. Interacts with host RBM24. Part of the replication complex composed of NS2, NS3, NS4A, NS4B, NS5A and the RNA-directed RNA polymerase embedded in an ER-derived membranous web. Part of the viral assembly initiation complex composed of NS2, E1, E2, NS3, NS4A, NS5A and the mature core protein. In terms of assembly, interacts with NS3 serine protease; this interaction stabilizes the folding of NS3 serine protease. NS3-NS4A interaction is essential for NS3 activation and allows membrane anchorage of the latter. Interacts with non-structural protein 5A (via N-terminus). Part of the replication complex composed of NS2, NS3, NS4A, NS4B, NS5A and the RNA-directed RNA polymerase embedded in an ER-derived membranous web. Part of the viral assembly initiation complex composed of NS2, E1, E2, NS3, NS4A, NS5A and the mature core protein. Homomultimer. Interacts with non-structural protein NS5A. Interacts with host PLA2G4C; this interaction likely initiates the recruitment of replication complexes to lipid droplets. Interacts with host STING; this interaction disrupts the interaction between STING and TBK1 thereby suppressing the interferon signaling. Part of the replication complex composed of NS2, NS3, NS4A, NS4B, NS5A and the RNA-directed RNA polymerase embedded in an ER-derived membranous web. As to quaternary structure, monomer. Homodimer; dimerization is required for RNA-binding. Interacts with the mature core protein. Interacts (via N-terminus) with non-structural protein 4A. Interacts with non-structural protein 4B. Interacts (via region D2) with RNA-directed RNA polymerase. Part of the viral assembly initiation complex composed of NS2, E1, E2, NS3, NS4A, NS5A and the mature core protein. Part of the replication complex composed of NS2, NS3, NS4A, NS4B, NS5A and the RNA-directed RNA polymerase embedded in an ER-derived membranous web. Interacts with host GRB2. Interacts with host BIN1. Interacts with host PIK3R1. Interacts with host SRCAP. Interacts with host FKBP8. Interacts (via C-terminus) with host VAPB (via MSP domain). Interacts with host EIF2AK2/PKR; this interaction leads to disruption of EIF2AK2 dimerization by NS5A and probably allows the virus to evade the innate immune response. Interacts (via N-terminus) with host PACSIN2 (via N-terminus); this interaction attenuates protein kinase C alpha-mediated phosphorylation of PACSIN2 by disrupting the interaction between PACSIN2 and PRKCA. Interacts (via N-terminus) with host SRC kinase (via SH2 domain). Interacts with most Src-family kinases. Interacts with host IFI27 and SKP2; promotes the ubiquitin-mediated proteasomal degradation of NS5A. Interacts with host GPS2. Interacts with host TNFRSF21; this interaction allows the modulation by the virus of JNK, p38 MAPK, STAT3, and Akt signaling pathways in a DR6-dependent manner. Interacts (via N-terminus) with host CIDEB (via N-terminus); this interaction seems to regulate the association of HCV particles with APOE. Interacts with host CHKA/Choline Kinase-alpha; CHKA bridges host PI4KA and NS5A and potentiates NS5A-stimulated PI4KA activity, which then facilitates the targeting of the ternary complex to the ER for viral replication. Interacts with host SPSB2 (via C-terminus); this interaction targets NS5A for ubiquitination and degradation. Interacts with host RAB18; this interaction may promote the association of NS5A and other replicase components with lipid droplets. Interacts (via region D2) with host PPIA/CYPA; the interaction stimulates RNA-binding ability of NS5A and is dependent on the peptidyl-prolyl cis-trans isomerase activity of PPIA/CYPA. Interacts with host TRIM14; this interaction induces the degradation of NS5A. In terms of assembly, homooligomer. Interacts with non-structural protein 5A. Interacts with host VAPB. Interacts with host PRK2/PKN2. Interacts with host HNRNPA1 and SEPT6; these interactions facilitate viral replication. Part of the replication complex composed of NS2, NS3, NS4A, NS4B, NS5A and the RNA-directed RNA polymerase. Zn(2+) is required as a cofactor. Mg(2+) serves as cofactor. Post-translationally, specific enzymatic cleavages in vivo yield mature proteins. The structural proteins, core, E1, E2 and p7 are produced by proteolytic processing by host signal peptidases. The core protein precursor is synthesized as a 23 kDa, which is retained in the ER membrane through the hydrophobic signal peptide. Cleavage by the signal peptidase releases the 21 kDa mature core protein. The cleavage of the core protein precursor occurs between aminoacids 176 and 188 but the exact cleavage site is not known. Some degraded forms of the core protein appear as well during the course of infection. The other proteins (p7, NS2, NS3, NS4A, NS4B, NS5A and NS5B) are cleaved by the viral proteases. Autoprocessing between NS2 and NS3 is mediated by the NS2 cysteine protease catalytic domain and regulated by the NS3 N-terminal domain. Phosphorylated by host PKC and PKA. In terms of processing, ubiquitinated; mediated by UBE3A and leading to core protein subsequent proteasomal degradation. Post-translationally, highly N-glycosylated. Palmitoylation is required for NS2/3 autoprocessing and E2 recruitment to membranes. In terms of processing, palmitoylated. This modification may play a role in its polymerization or in protein-protein interactions. Post-translationally, phosphorylated on serines in a basal form termed p56. p58 is a hyperphosphorylated form of p56. p56 and p58 coexist in the cell in roughly equivalent amounts. Hyperphosphorylation is dependent on the presence of NS4A. Host CSNK1A1/CKI-alpha or RPS6KB1 kinases may be responsible for NS5A phosphorylation. Tyrosine phosphorylation is essential for the interaction with host SRC. In terms of processing, ubiquitinated. Ubiquitination, most probably at Lys-2350, mediated by host IFI27 and SKP2 leads to proteasomal degradation, restricting viral infection. Ubiquitination by host TRIM22 leads to interruption of viral replication. Post-translationally, the N-terminus is phosphorylated by host PRK2/PKN2.

It is found in the host endoplasmic reticulum membrane. The protein localises to the host mitochondrion membrane. Its subcellular location is the virion. It localises to the host cytoplasm. The protein resides in the host nucleus. It is found in the host lipid droplet. The protein localises to the virion membrane. Its subcellular location is the host mitochondrion. It localises to the host cell membrane. The protein resides in the host perinuclear region. It carries out the reaction Hydrolysis of four peptide bonds in the viral precursor polyprotein, commonly with Asp or Glu in the P6 position, Cys or Thr in P1 and Ser or Ala in P1'.. The enzyme catalyses a ribonucleoside 5'-triphosphate + H2O = a ribonucleoside 5'-diphosphate + phosphate + H(+). It catalyses the reaction ATP + H2O = ADP + phosphate + H(+). The catalysed reaction is RNA(n) + a ribonucleoside 5'-triphosphate = RNA(n+1) + diphosphate. Inhibited by the antiviral drug hexamethylene amiloride. Inhibition by amantadine appears to be genotype-dependent. Also inhibited by long-alkyl-chain iminosugar derivatives. Its activity is regulated as follows. Activity is up-regulated by PRK2/PKN2-mediated phosphorylation. Functionally, packages viral RNA to form a viral nucleocapsid, and promotes virion budding. Participates in the viral particle production as a result of its interaction with the non-structural protein 5A. Binds RNA and may function as a RNA chaperone to induce the RNA structural rearrangements taking place during virus replication. Modulates viral translation initiation by interacting with viral IRES and 40S ribosomal subunit. Affects various cell signaling pathways, host immunity and lipid metabolism. Prevents the establishment of cellular antiviral state by blocking the interferon-alpha/beta (IFN-alpha/beta) and IFN-gamma signaling pathways and by blocking the formation of phosphorylated STAT1 and promoting ubiquitin-mediated proteasome-dependent degradation of STAT1. Activates STAT3 leading to cellular transformation. Regulates the activity of cellular genes, including c-myc and c-fos. May repress the promoter of p53, and sequester CREB3 and SP110 isoform 3/Sp110b in the cytoplasm. Represses cell cycle negative regulating factor CDKN1A, thereby interrupting an important check point of normal cell cycle regulation. Targets transcription factors involved in the regulation of inflammatory responses and in the immune response: suppresses TNF-induced NF-kappa-B activation, and activates AP-1. Binds to dendritic cells (DCs) via C1QR1, resulting in down-regulation of T-lymphocytes proliferation. Alters lipid metabolism by interacting with hepatocellular proteins involved in lipid accumulation and storage. Induces up-regulation of FAS promoter activity, and thereby contributes to the increased triglyceride accumulation in hepatocytes (steatosis). Its function is as follows. Forms a heterodimer with envelope glycoprotein E2, which mediates virus attachment to the host cell, virion internalization through clathrin-dependent endocytosis and fusion with host membrane. Fusion with the host cell is most likely mediated by both E1 and E2, through conformational rearrangements of the heterodimer required for fusion rather than a classical class II fusion mechanism. E1/E2 heterodimer binds host apolipoproteins such as APOB and APOE thereby forming a lipo-viro-particle (LVP). APOE associated to the LVP allows the initial virus attachment to cell surface receptors such as the heparan sulfate proteoglycans (HSPGs), syndecan-1 (SDC1), syndecan-1 (SDC2), the low-density lipoprotein receptor (LDLR) and scavenger receptor class B type I (SCARB1). The cholesterol transfer activity of SCARB1 allows E2 exposure and binding of E2 to SCARB1 and the tetraspanin CD81. E1/E2 heterodimer binding on CD81 activates the epithelial growth factor receptor (EGFR) signaling pathway. Diffusion of the complex E1-E2-EGFR-SCARB1-CD81 to the cell lateral membrane allows further interaction with Claudin 1 (CLDN1) and occludin (OCLN) to finally trigger HCV entry. In terms of biological role, forms a heterodimer with envelope glycoprotein E1, which mediates virus attachment to the host cell, virion internalization through clathrin-dependent endocytosis and fusion with host membrane. Fusion with the host cell is most likely mediated by both E1 and E2, through conformational rearrangements of the heterodimer required for fusion rather than a classical class II fusion mechanism. The interaction between envelope glycoprotein E2 and host apolipoprotein E/APOE allows the proper assembly, maturation and infectivity of the viral particles. This interaction is probably promoted via the up-regulation of cellular autophagy by the virus. E1/E2 heterodimer binds host apolipoproteins such as APOB and APOE thereby forming a lipo-viro-particle (LVP). APOE associated to the LVP allows the initial virus attachment to cell surface receptors such as the heparan sulfate proteoglycans (HSPGs), syndecan-1 (SDC1), syndecan-1 (SDC2), the low-density lipoprotein receptor (LDLR) and scavenger receptor class B type I (SCARB1). The cholesterol transfer activity of SCARB1 allows E2 exposure and binding of E2 to SCARB1 and the tetraspanin CD81. E1/E2 heterodimer binding on CD81 activates the epithelial growth factor receptor (EGFR) signaling pathway. Diffusion of the complex E1-E2-EGFR-SCARB1-CD81 to the cell lateral membrane allows further interaction with Claudin 1 (CLDN1) and occludin (OCLN) to finally trigger HCV entry. Inhibits host EIF2AK2/PKR activation, preventing the establishment of an antiviral state. Viral ligand for CD209/DC-SIGN and CLEC4M/DC-SIGNR, which are respectively found on dendritic cells (DCs), and on liver sinusoidal endothelial cells and macrophage-like cells of lymph node sinuses. These interactions allow the capture of circulating HCV particles by these cells and subsequent facilitated transmission to permissive cells such as hepatocytes and lymphocyte subpopulations. The interaction between E2 and host amino acid transporter complex formed by SLC3A2 and SLC7A5/LAT1 may facilitate viral entry into host cell. Ion channel protein that acts as a viroporin and plays an essential role in the assembly, envelopment and secretion of viral particles. Regulates the host cell secretory pathway, which induces the intracellular retention of viral glycoproteins and favors assembly of viral particles. Creates a pore in acidic organelles and releases Ca(2+) and H(+) in the cytoplasm of infected cells, leading to a productive viral infection. High levels of cytoplasmic Ca(2+) may trigger membrane trafficking and transport of viral ER-associated proteins to viroplasms, sites of viral genome replication. This ionic imbalance induces the assembly of the inflammasome complex, which triggers the maturation of pro-IL-1beta into IL-1beta through the action of caspase-1. Targets also host mitochondria and induces mitochondrial depolarization. In addition of its role as a viroporin, acts as a lipid raft adhesion factor. Functionally, cysteine protease required for the proteolytic auto-cleavage between the non-structural proteins NS2 and NS3. The N-terminus of NS3 is required for the function of NS2 protease (active region NS2-3). Promotes the initiation of viral particle assembly by mediating the interaction between structural and non-structural proteins. Its function is as follows. Displays three enzymatic activities: serine protease with a chymotrypsin-like fold, NTPase and RNA helicase. NS3 serine protease, in association with NS4A, is responsible for the cleavages of NS3-NS4A, NS4A-NS4B, NS4B-NS5A and NS5A-NS5B. The NS3/NS4A complex prevents phosphorylation of host IRF3, thus preventing the establishment of dsRNA induced antiviral state. The NS3/NS4A complex induces host amino acid transporter component SLC3A2, thus contributing to HCV propagation. NS3 RNA helicase binds to RNA and unwinds both dsDNA and dsRNA in the 3' to 5' direction, and likely resolves RNA complicated stable secondary structures in the template strand. Binds a single ATP and catalyzes the unzipping of a single base pair of dsRNA. Inhibits host antiviral proteins TBK1 and IRF3 thereby preventing the establishment of an antiviral state. Cleaves host MAVS/CARDIF thereby preventing the establishment of an antiviral state. Cleaves host TICAM1/TRIF, thereby disrupting TLR3 signaling and preventing the establishment of an antiviral state. In terms of biological role, peptide cofactor which forms a non-covalent complex with the N-terminal of NS3 serine protease. The NS3/NS4A complex prevents phosphorylation of host IRF3, thus preventing the establishment of dsRNA induced antiviral state. The NS3/NS4A complex induces host amino acid transporter component SLC3A2, thus contributing to HCV propagation. Induces a specific membrane alteration that serves as a scaffold for the virus replication complex. This membrane alteration gives rise to the so-called ER-derived membranous web that contains the replication complex. NS4B self-interaction contributes to its function in membranous web formation. Promotes host TRIF protein degradation in a CASP8-dependent manner thereby inhibiting host TLR3-mediated interferon signaling. Disrupts the interaction between STING and TBK1 contributing to the inhibition of interferon signaling. Functionally, phosphorylated protein that is indispensable for viral replication and assembly. Both hypo- and hyperphosphorylated states are required for the viral life cycle. The hyperphosphorylated form of NS5A is an inhibitor of viral replication. Involved in RNA-binding and especially in binding to the viral genome. Zinc is essential for RNA-binding. Participates in the viral particle production as a result of its interaction with the mature viral core protein. Its interaction with host VAPB may target the viral replication complex to vesicles. Down-regulates viral IRES translation initiation. Mediates interferon resistance, presumably by interacting with and inhibiting host EIF2AK2/PKR. Prevents BIN1-induced apoptosis. Acts as a transcriptional activator of some host genes important for viral replication when localized in the nucleus. Via the interaction with host PACSIN2, modulates lipid droplet formation in order to promote virion assembly. Modulates TNFRSF21/DR6 signaling pathway for viral propagation. Its function is as follows. RNA-dependent RNA polymerase that performs primer-template recognition and RNA synthesis during viral replication. Initiates RNA transcription/replication at a flavin adenine dinucleotide (FAD), resulting in a 5'- FAD cap on viral RNAs. In this way, recognition of viral 5' RNA by host pattern recognition receptors can be bypassed, thereby evading activation of antiviral pathways. The chain is Genome polyprotein from Homo sapiens (Human).